The chain runs to 330 residues: Putative [LysW]-L-2-aminoadipate/[LysW]-L-glutamate phosphate reductase (330 aa).

10–13 (SGYI) serves as a coordination point for NADP(+). Residue Cys142 is part of the active site. Asn297 serves as a coordination point for NADP(+).

The protein belongs to the NAGSA dehydrogenase family. Type 1 subfamily. LysY sub-subfamily.

Its subcellular location is the cytoplasm. The catalysed reaction is [amino-group carrier protein]-C-terminal-N-(1-carboxy-5-oxopentan-1-yl)-L-glutamine + phosphate + NADP(+) = [amino-group carrier protein]-C-terminal-N-(1-carboxy-5-phosphooxy-5-oxopentan-1-yl)-L-glutamine + NADPH + H(+). It catalyses the reaction [amino-group carrier protein]-C-terminal-gamma-(L-glutamyl-5-semialdehyde)-L-glutamate + phosphate + NADP(+) = [amino-group carrier protein]-C-terminal-gamma-(5-phospho-L-glutamyl)-L-glutamate + NADPH + H(+). The protein operates within amino-acid biosynthesis; L-lysine biosynthesis via AAA pathway; L-lysine from L-alpha-aminoadipate (Thermus route): step 3/5. It functions in the pathway amino-acid biosynthesis; L-arginine biosynthesis. Its function is as follows. Involved in both the arginine and lysine biosynthetic pathways. This chain is Putative [LysW]-L-2-aminoadipate/[LysW]-L-glutamate phosphate reductase, found in Pyrococcus furiosus (strain ATCC 43587 / DSM 3638 / JCM 8422 / Vc1).